The following is a 246-amino-acid chain: 3'(2'),5'-bisphosphate nucleotidase CysQ (246 aa).

Residues E64, D83, L85, D86, and D205 each contribute to the Mg(2+) site. Position 64 (E64) interacts with substrate. Substrate contacts are provided by residues 85-88 (LDGT) and D205.

This sequence belongs to the inositol monophosphatase superfamily. CysQ family. Requires Mg(2+) as cofactor.

It is found in the cell inner membrane. The enzyme catalyses adenosine 3',5'-bisphosphate + H2O = AMP + phosphate. Functionally, converts adenosine-3',5'-bisphosphate (PAP) to AMP. The sequence is that of 3'(2'),5'-bisphosphate nucleotidase CysQ from Escherichia coli O6:H1 (strain CFT073 / ATCC 700928 / UPEC).